Consider the following 633-residue polypeptide: Pesticidal crystal protein Cry2Aa (633 aa).

It belongs to the delta endotoxin family.

Its function is as follows. Promotes colloidosmotic lysis by binding to the midgut epithelial cells of both dipteran (Aedes aegypti) and lepidopteran (Manduca sexta) larvae. The sequence is that of Pesticidal crystal protein Cry2Aa (cry2Aa) from Bacillus thuringiensis subsp. kurstaki.